Consider the following 201-residue polypeptide: Probable DNA replication complex GINS protein PSF1 (201 aa).

Belongs to the GINS1/PSF1 family. As to quaternary structure, component of the GINS complex which is a heterotetramer of gins1, gins2, gins3 and gins4.

It localises to the nucleus. The GINS complex plays an essential role in the initiation of DNA replication. This chain is Probable DNA replication complex GINS protein PSF1, found in Caenorhabditis briggsae.